Reading from the N-terminus, the 320-residue chain is Phosphate acetyltransferase (320 aa).

The protein belongs to the phosphate acetyltransferase and butyryltransferase family.

It localises to the cytoplasm. It carries out the reaction acetyl-CoA + phosphate = acetyl phosphate + CoA. Its pathway is metabolic intermediate biosynthesis; acetyl-CoA biosynthesis; acetyl-CoA from acetate: step 2/2. The protein is Phosphate acetyltransferase (pta) of Mycoplasma genitalium (strain ATCC 33530 / DSM 19775 / NCTC 10195 / G37) (Mycoplasmoides genitalium).